Reading from the N-terminus, the 259-residue chain is Factor V activator (259 aa).

A signal peptide spans 1–18 (MVLIRVLANLLVLQLSYA). Positions 19–24 (QKSSEL) are excised as a propeptide. A Peptidase S1 domain is found at 25–251 (VVGGDECDIN…YTDWIQSIIA (227 aa)). 6 disulfide bridges follow: cysteine 31-cysteine 165, cysteine 52-cysteine 68, cysteine 100-cysteine 258, cysteine 144-cysteine 212, cysteine 176-cysteine 191, and cysteine 202-cysteine 227. Residues histidine 67 and aspartate 112 each act as charge relay system in the active site. Serine 206 functions as the Charge relay system in the catalytic mechanism. N-linked (GlcNAc...) asparagine glycosylation is present at asparagine 253.

This sequence belongs to the peptidase S1 family. Snake venom subfamily. As to quaternary structure, monomer. N-glycosylated. Contains 4.4% of hexoses, 4.4% of hexosamines and 3.1% of sialic acids. In terms of tissue distribution, expressed by the venom gland.

It localises to the secreted. The catalysed reaction is Fully activates human clotting factor V by a single cleavage at the 1545-Trp-Tyr-Leu-Arg-|-Ser-Asn-Asn-Gly-1552 bond. Cattle, but not rabbit, factor V is cleaved, and no other proteins of the clotting system are attacked. Esterase activity is observed on Bz-Arg-OEt and Tos-Arg-OMe, and amidase activity on Phe-pipecolyl-Arg-NHPhNO2.. With respect to regulation, inhibited by D-Phe-Pro-Arg-chloromethyl ketone (FPRCK) (98%), PMSF (93%), benzamidine (67%), and diisopropylfluorophosphate (DFP). Is not inhibited by BPTI, antithrombin and EDTA. In terms of biological role, venom serine protease that converts factor V (F5) to the active form Va in the presence of calcium ions and phospholipids. It cleaves the Arg(1545)-Ser(1546) linkage in the human factor V molecule. Has hydrolytic activities against BAEE (1.2 U/mg), TAME, and Pro-Phe-Arg-MCA (4.9 U/mg). Shows coagulant activity. The polypeptide is Factor V activator (Macrovipera lebetinus (Levantine viper)).